A 444-amino-acid chain; its full sequence is Phosphoribosylamine--glycine ligase (444 aa).

The region spanning 109-324 (RNLFKKYNIK…FLEVCEAIVN (216 aa)) is the ATP-grasp domain. 140-202 (LTEKGIKAVV…EEKLEGVEFT (63 aa)) is a binding site for ATP. The Mg(2+) site is built by glutamine 282, glutamate 294, and asparagine 296. Residues glutamine 282, glutamate 294, and asparagine 296 each contribute to the Mn(2+) site.

It belongs to the GARS family. It depends on Mg(2+) as a cofactor. Requires Mn(2+) as cofactor.

It catalyses the reaction 5-phospho-beta-D-ribosylamine + glycine + ATP = N(1)-(5-phospho-beta-D-ribosyl)glycinamide + ADP + phosphate + H(+). The protein operates within purine metabolism; IMP biosynthesis via de novo pathway; N(1)-(5-phospho-D-ribosyl)glycinamide from 5-phospho-alpha-D-ribose 1-diphosphate: step 2/2. The sequence is that of Phosphoribosylamine--glycine ligase from Methanocaldococcus jannaschii (strain ATCC 43067 / DSM 2661 / JAL-1 / JCM 10045 / NBRC 100440) (Methanococcus jannaschii).